Here is a 213-residue protein sequence, read N- to C-terminus: Octanoyltransferase (213 aa).

The region spanning 35 to 213 is the BPL/LPL catalytic domain; the sequence is DERGDAVLLL…ERHLPTLIEP (179 aa). Substrate is bound by residues 73–80, 145–147, and 158–160; these read RGGKITWH, AIG, and GFS. Residue C176 is the Acyl-thioester intermediate of the active site.

It belongs to the LipB family.

The protein resides in the cytoplasm. The catalysed reaction is octanoyl-[ACP] + L-lysyl-[protein] = N(6)-octanoyl-L-lysyl-[protein] + holo-[ACP] + H(+). Its pathway is protein modification; protein lipoylation via endogenous pathway; protein N(6)-(lipoyl)lysine from octanoyl-[acyl-carrier-protein]: step 1/2. Catalyzes the transfer of endogenously produced octanoic acid from octanoyl-acyl-carrier-protein onto the lipoyl domains of lipoate-dependent enzymes. Lipoyl-ACP can also act as a substrate although octanoyl-ACP is likely to be the physiological substrate. The polypeptide is Octanoyltransferase (Salinispora tropica (strain ATCC BAA-916 / DSM 44818 / JCM 13857 / NBRC 105044 / CNB-440)).